We begin with the raw amino-acid sequence, 419 residues long: Serine hydroxymethyltransferase (419 aa).

Residues Leu-121 and 125–127 (GHL) contribute to the (6S)-5,6,7,8-tetrahydrofolate site. Lys-230 is modified (N6-(pyridoxal phosphate)lysine). A (6S)-5,6,7,8-tetrahydrofolate-binding site is contributed by 354–356 (SPF).

The protein belongs to the SHMT family. In terms of assembly, homodimer. Pyridoxal 5'-phosphate is required as a cofactor.

The protein resides in the cytoplasm. It carries out the reaction (6R)-5,10-methylene-5,6,7,8-tetrahydrofolate + glycine + H2O = (6S)-5,6,7,8-tetrahydrofolate + L-serine. It functions in the pathway one-carbon metabolism; tetrahydrofolate interconversion. Its pathway is amino-acid biosynthesis; glycine biosynthesis; glycine from L-serine: step 1/1. Catalyzes the reversible interconversion of serine and glycine with tetrahydrofolate (THF) serving as the one-carbon carrier. This reaction serves as the major source of one-carbon groups required for the biosynthesis of purines, thymidylate, methionine, and other important biomolecules. Also exhibits THF-independent aldolase activity toward beta-hydroxyamino acids, producing glycine and aldehydes, via a retro-aldol mechanism. The polypeptide is Serine hydroxymethyltransferase (Prochlorococcus marinus (strain SARG / CCMP1375 / SS120)).